The following is a 624-amino-acid chain: Bifunctional protein ArgH (624 aa).

Residues 1-466 form an argininosuccinate lyase region; the sequence is MALWGGRFTQ…AARDTTLVKV (466 aa). One can recognise an N-acetyltransferase domain in the interval 464-614; it reads VKVRPARITD…DEVALEFNLS (151 aa). Residues 467–624 are probable acetyltransferase; the sequence is RPARITDIET…EQIISQVKVA (158 aa).

In the N-terminal section; belongs to the lyase 1 family. Argininosuccinate lyase subfamily.

It localises to the cytoplasm. The enzyme catalyses 2-(N(omega)-L-arginino)succinate = fumarate + L-arginine. It participates in amino-acid biosynthesis; L-arginine biosynthesis; L-arginine from L-ornithine and carbamoyl phosphate: step 3/3. This chain is Bifunctional protein ArgH (argH), found in Vibrio vulnificus (strain CMCP6).